Reading from the N-terminus, the 395-residue chain is Acetate kinase (395 aa).

Asn8 provides a ligand contact to Mg(2+). ATP is bound at residue Lys15. Arg94 lines the substrate pocket. The active-site Proton donor/acceptor is Asp151. ATP-binding positions include 210 to 214, 284 to 286, and 329 to 333; these read HLGNG, DMR, and GIGEN. Glu382 is a binding site for Mg(2+).

Belongs to the acetokinase family. Homodimer. Requires Mg(2+) as cofactor. It depends on Mn(2+) as a cofactor.

The protein resides in the cytoplasm. It catalyses the reaction acetate + ATP = acetyl phosphate + ADP. It functions in the pathway metabolic intermediate biosynthesis; acetyl-CoA biosynthesis; acetyl-CoA from acetate: step 1/2. Functionally, catalyzes the formation of acetyl phosphate from acetate and ATP. Can also catalyze the reverse reaction. The sequence is that of Acetate kinase from Protochlamydia amoebophila (strain UWE25).